A 236-amino-acid chain; its full sequence is Probable fimbrial chaperone EcpE (236 aa).

The N-terminal stretch at 1–27 (MFRRRGVTLTKALLTAVCMLAAPLTQA) is a signal peptide.

It belongs to the EcpB/EcpE family.

Functionally, part of the ecpRABCDE operon, which encodes the E.coli common pilus (ECP). ECP is found in both commensal and pathogenic strains and plays a dual role in early-stage biofilm development and host cell recognition. The chain is Probable fimbrial chaperone EcpE (ecpE) from Escherichia coli (strain K12).